A 245-amino-acid chain; its full sequence is tRNA (guanine-N(1)-)-methyltransferase (245 aa).

S-adenosyl-L-methionine is bound by residues Gly114 and 134–139; that span reads IGDYIL.

The protein belongs to the RNA methyltransferase TrmD family. In terms of assembly, homodimer.

It localises to the cytoplasm. The catalysed reaction is guanosine(37) in tRNA + S-adenosyl-L-methionine = N(1)-methylguanosine(37) in tRNA + S-adenosyl-L-homocysteine + H(+). Specifically methylates guanosine-37 in various tRNAs. In Listeria monocytogenes serotype 4b (strain CLIP80459), this protein is tRNA (guanine-N(1)-)-methyltransferase.